A 185-amino-acid polypeptide reads, in one-letter code: Ribosome-recycling factor (185 aa).

A disordered region spans residues Arg-143–Ser-163.

The protein belongs to the RRF family.

The protein resides in the cytoplasm. Functionally, responsible for the release of ribosomes from messenger RNA at the termination of protein biosynthesis. May increase the efficiency of translation by recycling ribosomes from one round of translation to another. This Mycobacterium ulcerans (strain Agy99) protein is Ribosome-recycling factor.